The following is a 494-amino-acid chain: Aspartyl/glutamyl-tRNA(Asn/Gln) amidotransferase subunit B (494 aa).

This sequence belongs to the GatB/GatE family. GatB subfamily. Heterotrimer of A, B and C subunits.

The enzyme catalyses L-glutamyl-tRNA(Gln) + L-glutamine + ATP + H2O = L-glutaminyl-tRNA(Gln) + L-glutamate + ADP + phosphate + H(+). It catalyses the reaction L-aspartyl-tRNA(Asn) + L-glutamine + ATP + H2O = L-asparaginyl-tRNA(Asn) + L-glutamate + ADP + phosphate + 2 H(+). In terms of biological role, allows the formation of correctly charged Asn-tRNA(Asn) or Gln-tRNA(Gln) through the transamidation of misacylated Asp-tRNA(Asn) or Glu-tRNA(Gln) in organisms which lack either or both of asparaginyl-tRNA or glutaminyl-tRNA synthetases. The reaction takes place in the presence of glutamine and ATP through an activated phospho-Asp-tRNA(Asn) or phospho-Glu-tRNA(Gln). The polypeptide is Aspartyl/glutamyl-tRNA(Asn/Gln) amidotransferase subunit B (Protochlamydia amoebophila (strain UWE25)).